Consider the following 260-residue polypeptide: Large ribosomal subunit protein uL4 (260 aa).

It belongs to the universal ribosomal protein uL4 family. As to quaternary structure, part of the 50S ribosomal subunit.

In terms of biological role, one of the primary rRNA binding proteins, this protein initially binds near the 5'-end of the 23S rRNA. It is important during the early stages of 50S assembly. It makes multiple contacts with different domains of the 23S rRNA in the assembled 50S subunit and ribosome. Functionally, forms part of the polypeptide exit tunnel. The protein is Large ribosomal subunit protein uL4 of Methanopyrus kandleri (strain AV19 / DSM 6324 / JCM 9639 / NBRC 100938).